Reading from the N-terminus, the 50-residue chain is Bacteriocin BacSp222 (50 aa).

Met1 bears the N-formylmethionine mark.

The protein resides in the secreted. Functionally, has bacteriolytic activity against Gram-positive bacteria B.subtilis, L.lactis and M.luteus and several species from genus Staphylococcus including methicillin-resistant S.aureus, with MIC values ranging from 0.11 uM to 7.8 uM. Has no activity against Gram-negative bacteria or fungi. In vitro, has a dose-dependent cytolytic effect on eukaryotic cells. This Staphylococcus pseudintermedius protein is Bacteriocin BacSp222.